A 147-amino-acid chain; its full sequence is Hemoglobin subunit gamma (147 aa).

The region spanning 3–147 (NFTAEDKAAI…VASALASRYH (145 aa)) is the Globin domain. The heme b site is built by histidine 64 and histidine 93.

This sequence belongs to the globin family. As to quaternary structure, heterotetramer of two alpha chains and two gamma chains in fetal hemoglobin (Hb F). In terms of tissue distribution, red blood cells.

In terms of biological role, gamma chains make up the fetal hemoglobin F, in combination with alpha chains. This Lagothrix lagotricha (Brown woolly monkey) protein is Hemoglobin subunit gamma (HBG).